The chain runs to 1393 residues: ABC transporter G family member 3 (1393 aa).

Positions 1 to 14 (MEDKNNIELQEKAP) are enriched in basic and acidic residues. A disordered region spans residues 1 to 68 (MEDKNNIELQ…IIYQNPTPAS (68 aa)). Residues 15–50 (DNYNNNNNNNNNNNNNNNNNNNNNNNNNNNNNNDIN) show a composition bias toward low complexity. In terms of domain architecture, ABC transporter 1 spans 100–353 (VSANNISYYI…YFSSIGLAPL (254 aa)). 144 to 151 (GIPGAGKS) contributes to the ATP binding site. An ABC transmembrane type-2 1 domain is found at 473–698 (MQYAVRFFQA…SYADGGYQGN (226 aa)). Transmembrane regions (helical) follow at residues 479–499 (FFQA…MGFT), 509–529 (LVYF…EEFF), 558–578 (IPIS…IAGF), 585–605 (FIVF…IFQV), 615–635 (LASL…GYMI), 640–660 (IPGW…IDMV), and 724–744 (VDIV…FLGV). Residues 783–1035 (MTFQNLNYVV…VIQHFTSAGY (253 aa)) form the ABC transporter 2 domain. Residue 828–835 (GPSGAGKS) coordinates ATP. The 268-residue stretch at 1121 to 1388 (QTILLRFLRS…FLGYLALRFI (268 aa)) folds into the ABC transmembrane type-2 2 domain. Helical transmembrane passes span 1122 to 1142 (TILL…TLFL), 1157 to 1177 (LVFL…PTIV), 1206 to 1226 (LPMM…LTGL), 1235 to 1255 (FFFS…LATL), 1265 to 1285 (IAIL…GFFI), and 1364 to 1384 (FYNL…GYLA).

This sequence belongs to the ABC transporter superfamily. ABCG family. PDR (TC 3.A.1.205) subfamily.

The protein localises to the membrane. This chain is ABC transporter G family member 3 (abcG3), found in Dictyostelium discoideum (Social amoeba).